Here is an 86-residue protein sequence, read N- to C-terminus: Putative membrane protein insertion efficiency factor (86 aa).

Belongs to the UPF0161 family.

The protein localises to the cell membrane. In terms of biological role, could be involved in insertion of integral membrane proteins into the membrane. The chain is Putative membrane protein insertion efficiency factor from Streptococcus pyogenes serotype M1.